The chain runs to 625 residues: tRNA uridine 5-carboxymethylaminomethyl modification enzyme MnmG (625 aa).

Residue 14 to 19 participates in FAD binding; the sequence is GAGHAG. 273–287 is a binding site for NAD(+); sequence GPRYCPSIEDKIVRF.

It belongs to the MnmG family. Homodimer. Heterotetramer of two MnmE and two MnmG subunits. The cofactor is FAD.

It localises to the cytoplasm. NAD-binding protein involved in the addition of a carboxymethylaminomethyl (cmnm) group at the wobble position (U34) of certain tRNAs, forming tRNA-cmnm(5)s(2)U34. This is tRNA uridine 5-carboxymethylaminomethyl modification enzyme MnmG from Clostridium botulinum (strain Okra / Type B1).